We begin with the raw amino-acid sequence, 235 residues long: tRNA1(Val) (adenine(37)-N6)-methyltransferase (235 aa).

This sequence belongs to the methyltransferase superfamily. tRNA (adenine-N(6)-)-methyltransferase family.

Its subcellular location is the cytoplasm. The catalysed reaction is adenosine(37) in tRNA1(Val) + S-adenosyl-L-methionine = N(6)-methyladenosine(37) in tRNA1(Val) + S-adenosyl-L-homocysteine + H(+). In terms of biological role, specifically methylates the adenine in position 37 of tRNA(1)(Val) (anticodon cmo5UAC). In Flavobacterium johnsoniae (strain ATCC 17061 / DSM 2064 / JCM 8514 / BCRC 14874 / CCUG 350202 / NBRC 14942 / NCIMB 11054 / UW101) (Cytophaga johnsonae), this protein is tRNA1(Val) (adenine(37)-N6)-methyltransferase.